Here is a 414-residue protein sequence, read N- to C-terminus: MEQQQRYISVLDIGTSKVLALIGEVQDDDKINIVGLGQAPSRGLRAGMVTNIDATVQAIRQAVNDAELMADTKITHVTTGIAGNHIRSLNSQGVVKIKDGEVTQADIDRAIETAKAINIPPDQKILDAVVQDYIIDTQLGVREPIGMSGVRLDTRVHIITGASTAVQNVQKCIERCGLKSDQIMLQPLASGQAVLTEDEKDLGVCVIDIGGGTTDIAVYMNGAIRHTSVIPAGGNLITKDLSKSLRTPLDAAEYIKIHYGVASCDTEGLGEMIEVPGVGDRTSRQVSSKVLAAIISARIQEIFGVVLGELQKSGFPKEVLNAGIVLTGGVSMMTGIVEFAEKIFDLPVRTGAPQEMGGLSDRVRTPRFSTAIGLLHAACKLEGNLPQPENGAVQEREGGGGLLARLKRWIENSF.

It belongs to the FtsA/MreB family. In terms of assembly, self-interacts. Interacts with FtsZ.

It is found in the cell inner membrane. Cell division protein that is involved in the assembly of the Z ring. May serve as a membrane anchor for the Z ring. In Neisseria meningitidis serogroup B (strain ATCC BAA-335 / MC58), this protein is Cell division protein FtsA.